Consider the following 211-residue polypeptide: ATP phosphoribosyltransferase (211 aa).

The protein belongs to the ATP phosphoribosyltransferase family. Short subfamily. Heteromultimer composed of HisG and HisZ subunits.

The protein localises to the cytoplasm. It carries out the reaction 1-(5-phospho-beta-D-ribosyl)-ATP + diphosphate = 5-phospho-alpha-D-ribose 1-diphosphate + ATP. It participates in amino-acid biosynthesis; L-histidine biosynthesis; L-histidine from 5-phospho-alpha-D-ribose 1-diphosphate: step 1/9. Catalyzes the condensation of ATP and 5-phosphoribose 1-diphosphate to form N'-(5'-phosphoribosyl)-ATP (PR-ATP). Has a crucial role in the pathway because the rate of histidine biosynthesis seems to be controlled primarily by regulation of HisG enzymatic activity. The chain is ATP phosphoribosyltransferase from Pseudomonas fluorescens (strain ATCC BAA-477 / NRRL B-23932 / Pf-5).